The sequence spans 472 residues: Argininosuccinate lyase (472 aa).

Belongs to the lyase 1 family. Argininosuccinate lyase subfamily.

It is found in the cytoplasm. The enzyme catalyses 2-(N(omega)-L-arginino)succinate = fumarate + L-arginine. It functions in the pathway amino-acid biosynthesis; L-arginine biosynthesis; L-arginine from L-ornithine and carbamoyl phosphate: step 3/3. This is Argininosuccinate lyase from Maricaulis maris (strain MCS10) (Caulobacter maris).